Here is a 295-residue protein sequence, read N- to C-terminus: Alpha-ketoglutarate-dependent dioxygenase alkB homolog 3 (295 aa).

The interval methionine 1 to glutamine 48 is disordered. Positions serine 22–serine 35 are enriched in low complexity. Substrate-binding positions include tryptophan 115 and tyrosine 141–tyrosine 143. Residues threonine 172 to tyrosine 278 enclose the Fe2OG dioxygenase domain. Leucine 177 bears the (4R)-5-hydroxyleucine; alternate mark. Leucine 177 bears the (4R)-5-oxoleucine; alternate mark. Residue asparagine 179–tyrosine 181 participates in 2-oxoglutarate binding. Fe cation is bound by residues histidine 191 and aspartate 193. Aspartate 194 lines the substrate pocket. Residue histidine 257 coordinates Fe cation. Residues arginine 269–arginine 275 and arginine 275 contribute to the 2-oxoglutarate site.

It belongs to the alkB family. In terms of assembly, interacts with the ASCC complex composed of ASCC1, ASCC2 and ASCC3. Interacts directly with ASCC3, and is thereby recruited to the ASCC complex. Interacts with OTUD4; the interaction is direct. Interacts with USP7 and USP9X. Requires Fe(2+) as cofactor. Ubiquitinated; undergoes 'Lys-48'-linked polyubiquitination. OTUD4 promotes USP7 and USP9X-dependent deubiquitination of 'Lys-48'-polyubiquitinated ALKBH3 promoting the repair of alkylated DNA lesions.

It localises to the nucleus. It is found in the cytoplasm. It catalyses the reaction an N(1)-methyladenosine in mRNA + 2-oxoglutarate + O2 = an adenosine in mRNA + formaldehyde + succinate + CO2. It carries out the reaction a methylated nucleobase within DNA + 2-oxoglutarate + O2 = a nucleobase within DNA + formaldehyde + succinate + CO2. The catalysed reaction is an N(1)-methyl-2'-deoxyadenosine in single-stranded DNA + 2-oxoglutarate + O2 = a 2'-deoxyadenosine in single-stranded DNA + formaldehyde + succinate + CO2 + H(+). The enzyme catalyses an N(3)-methyl-2'-deoxycytidine in single-stranded DNA + 2-oxoglutarate + O2 = a 2'-deoxycytidine in single-stranded DNA + formaldehyde + succinate + CO2 + H(+). It catalyses the reaction a 3,N(4)-etheno-2'-deoxycytidine in single-stranded DNA + 2-oxoglutarate + O2 + H2O = a 2'-deoxycytidine in single-stranded DNA + glyoxal + succinate + CO2. Activated by ascorbate. Functionally, dioxygenase that mediates demethylation of DNA and RNA containing 1-methyladenosine (m1A). Repairs alkylated DNA containing 1-methyladenosine (m1A) and 3-methylcytosine (m3C) by oxidative demethylation. Has a strong preference for single-stranded DNA. Able to process alkylated m3C within double-stranded regions via its interaction with ASCC3, which promotes DNA unwinding to generate single-stranded substrate needed for ALKBH3. Can repair exocyclic 3,N4-ethenocytosine adducs in single-stranded DNA. Also acts on RNA. Demethylates N(1)-methyladenosine (m1A) RNA, an epigenetic internal modification of messenger RNAs (mRNAs) highly enriched within 5'-untranslated regions (UTRs) and in the vicinity of start codons. Requires molecular oxygen, alpha-ketoglutarate and iron. In Rattus norvegicus (Rat), this protein is Alpha-ketoglutarate-dependent dioxygenase alkB homolog 3.